Reading from the N-terminus, the 237-residue chain is Lipoprotein-releasing system ATP-binding protein LolD (237 aa).

The region spanning 16-237 (LKCEGLTRIY…LDQGRLSEDA (222 aa)) is the ABC transporter domain. Position 52–59 (52–59 (GSSGSGKT)) interacts with ATP.

The protein belongs to the ABC transporter superfamily. Lipoprotein translocase (TC 3.A.1.125) family. As to quaternary structure, the complex is composed of two ATP-binding proteins (LolD) and two transmembrane proteins (LolC and LolE).

It is found in the cell inner membrane. Part of the ABC transporter complex LolCDE involved in the translocation of mature outer membrane-directed lipoproteins, from the inner membrane to the periplasmic chaperone, LolA. Responsible for the formation of the LolA-lipoprotein complex in an ATP-dependent manner. The chain is Lipoprotein-releasing system ATP-binding protein LolD from Chromohalobacter salexigens (strain ATCC BAA-138 / DSM 3043 / CIP 106854 / NCIMB 13768 / 1H11).